The chain runs to 416 residues: Dihydroorotase (416 aa).

The Zn(2+) site is built by histidine 53 and histidine 55. Substrate is bound by residues 55–57 and asparagine 87; that span reads HLR. Zn(2+) is bound by residues aspartate 145, histidine 172, histidine 225, and aspartate 298. Residue aspartate 298 is part of the active site. Histidine 302 contributes to the substrate binding site.

It belongs to the metallo-dependent hydrolases superfamily. DHOase family. Class I DHOase subfamily. Zn(2+) is required as a cofactor.

It carries out the reaction (S)-dihydroorotate + H2O = N-carbamoyl-L-aspartate + H(+). The protein operates within pyrimidine metabolism; UMP biosynthesis via de novo pathway; (S)-dihydroorotate from bicarbonate: step 3/3. In terms of biological role, catalyzes the reversible cyclization of carbamoyl aspartate to dihydroorotate. This chain is Dihydroorotase, found in Deinococcus radiodurans (strain ATCC 13939 / DSM 20539 / JCM 16871 / CCUG 27074 / LMG 4051 / NBRC 15346 / NCIMB 9279 / VKM B-1422 / R1).